Here is a 51-residue protein sequence, read N- to C-terminus: VSIDCSGYPKPACTLEFFPLCGSDNQTYSNKCAFCNAAVEKNVTLNHIGEC.

Positions 3–51 constitute a Kazal-like domain; sequence IDCSGYPKPACTLEFFPLCGSDNQTYSNKCAFCNAAVEKNVTLNHIGEC. 3 disulfide bridges follow: cysteine 5-cysteine 35, cysteine 13-cysteine 32, and cysteine 21-cysteine 51. A glycan (N-linked (GlcNAc...) asparagine) is linked at asparagine 42.

The protein localises to the secreted. This chain is Ovomucoid, found in Eudromia elegans (Elegant crested-tinamou).